Reading from the N-terminus, the 360-residue chain is Protein RecA (360 aa).

Residue 64-71 (GHESSGKT) participates in ATP binding. Residues 333-360 (QEQVQPEPKSKQSKSKQASEQATQDELI) are disordered.

Belongs to the RecA family.

The protein localises to the cytoplasm. Its function is as follows. Can catalyze the hydrolysis of ATP in the presence of single-stranded DNA, the ATP-dependent uptake of single-stranded DNA by duplex DNA, and the ATP-dependent hybridization of homologous single-stranded DNAs. It interacts with LexA causing its activation and leading to its autocatalytic cleavage. The polypeptide is Protein RecA (Francisella philomiragia subsp. philomiragia (strain ATCC 25017 / CCUG 19701 / FSC 153 / O#319-036)).